A 259-amino-acid polypeptide reads, in one-letter code: UPF0246 protein Avin_11220 (259 aa).

It belongs to the UPF0246 family.

The protein is UPF0246 protein Avin_11220 of Azotobacter vinelandii (strain DJ / ATCC BAA-1303).